The following is a 701-amino-acid chain: Polyribonucleotide nucleotidyltransferase (701 aa).

Mg(2+) is bound by residues Asp-487 and Asp-493. A KH domain is found at 554–613; it reads PTMIAMKIDTDKIRDVIGKGGATIRAICEETKASIDIEDDGSIKIFGESKEAAEAARQRV. The 69-residue stretch at 623 to 691 folds into the S1 motif domain; sequence GKIYIGKVER…NRGRIKLSIK (69 aa).

This sequence belongs to the polyribonucleotide nucleotidyltransferase family. As to quaternary structure, component of the RNA degradosome, which is a multiprotein complex involved in RNA processing and mRNA degradation. Requires Mg(2+) as cofactor.

It localises to the cytoplasm. It carries out the reaction RNA(n+1) + phosphate = RNA(n) + a ribonucleoside 5'-diphosphate. Functionally, involved in mRNA degradation. Catalyzes the phosphorolysis of single-stranded polyribonucleotides processively in the 3'- to 5'-direction. This chain is Polyribonucleotide nucleotidyltransferase, found in Pseudomonas syringae pv. syringae (strain B728a).